We begin with the raw amino-acid sequence, 436 residues long: Anaerobic glycerol-3-phosphate dehydrogenase subunit B (436 aa).

It belongs to the anaerobic G-3-P dehydrogenase subunit B family. In terms of assembly, composed of a catalytic GlpA/B dimer and of membrane bound GlpC. The cofactor is FMN.

It catalyses the reaction a quinone + sn-glycerol 3-phosphate = dihydroxyacetone phosphate + a quinol. It participates in polyol metabolism; glycerol degradation via glycerol kinase pathway; glycerone phosphate from sn-glycerol 3-phosphate (anaerobic route): step 1/1. In terms of biological role, conversion of glycerol 3-phosphate to dihydroxyacetone. Uses fumarate or nitrate as electron acceptor. The sequence is that of Anaerobic glycerol-3-phosphate dehydrogenase subunit B from Vibrio cholerae serotype O1 (strain ATCC 39315 / El Tor Inaba N16961).